Reading from the N-terminus, the 310-residue chain is DNA-directed RNA polymerase subunit alpha (310 aa).

The tract at residues 1 to 230 (MLGKVNGVQI…KLFNPLRVLD (230 aa)) is alpha N-terminal domain (alpha-NTD). The segment at 242 to 310 (NSLIKQKLIE…YKKFGVKLKH (69 aa)) is alpha C-terminal domain (alpha-CTD).

This sequence belongs to the RNA polymerase alpha chain family. In plastids the minimal PEP RNA polymerase catalytic core is composed of four subunits: alpha, beta, beta', and beta''. When a (nuclear-encoded) sigma factor is associated with the core the holoenzyme is formed, which can initiate transcription.

It is found in the plastid. Its subcellular location is the chloroplast. The catalysed reaction is RNA(n) + a ribonucleoside 5'-triphosphate = RNA(n+1) + diphosphate. DNA-dependent RNA polymerase catalyzes the transcription of DNA into RNA using the four ribonucleoside triphosphates as substrates. The protein is DNA-directed RNA polymerase subunit alpha of Cyanidium caldarium (Red alga).